The sequence spans 98 residues: Putative membrane protein insertion efficiency factor (98 aa).

It belongs to the UPF0161 family.

It localises to the cell inner membrane. In terms of biological role, could be involved in insertion of integral membrane proteins into the membrane. The chain is Putative membrane protein insertion efficiency factor from Cupriavidus pinatubonensis (strain JMP 134 / LMG 1197) (Cupriavidus necator (strain JMP 134)).